Reading from the N-terminus, the 208-residue chain is LexA repressor (208 aa).

Positions 30–50 (VREICAAVKLSSTSTVHGHLA) form a DNA-binding region, H-T-H motif. Residues S129 and K167 each act as for autocatalytic cleavage activity in the active site.

The protein belongs to the peptidase S24 family. Homodimer.

The enzyme catalyses Hydrolysis of Ala-|-Gly bond in repressor LexA.. Its function is as follows. Represses a number of genes involved in the response to DNA damage (SOS response), including recA and lexA. In the presence of single-stranded DNA, RecA interacts with LexA causing an autocatalytic cleavage which disrupts the DNA-binding part of LexA, leading to derepression of the SOS regulon and eventually DNA repair. The chain is LexA repressor from Lactobacillus helveticus (strain DPC 4571).